Reading from the N-terminus, the 404-residue chain is Voltage-gated potassium channel subunit beta-3 (404 aa).

Over residues 1-14 (MQVSIACTEQNLRS) the composition is skewed to polar residues. Residues 1–78 (MQVSIACTEQ…RESTGRGTGM (78 aa)) form a disordered region. A compositionally biased stretch (gly residues) spans 28-50 (PGGGNGGPVGGGHGNPPGGGGLG). The NADP(+) site is built by threonine 97, tryptophan 98, glutamine 104, and aspartate 126. Tyrosine 131 functions as the Proton donor/acceptor in the catalytic mechanism. The NADP(+) site is built by asparagine 199, serine 229, arginine 230, glutamine 255, tryptophan 284, serine 285, proline 286, leucine 287, alanine 288, cysteine 289, lysine 295, lysine 305, glycine 364, serine 366, glutamine 370, and glutamate 373.

Belongs to the shaker potassium channel beta subunit family. As to quaternary structure, forms heteromultimeric complex with alpha subunits. Interacts with KCNA5 and KCNB2. Predominantly expressed in brain. Strongest expression in olfactory bulb and thalamic nuclei. Not detected in heart, spleen, lung, liver, skeletal muscle, kidney and testis.

Its subcellular location is the cytoplasm. Its function is as follows. Regulatory subunit of the voltage-gated potassium (Kv) channels composed of pore-forming and potassium-conducting alpha subunits and of regulatory beta subunits. The beta-3/KCNAB3 subunit may mediate closure of potassium channels. Inactivates Kv1.4/KCNA4 alpha subunit-containing Kv channel current but not Kv1.1/KCNA1 or Kv1.5/KCNA5 channels. May display nicotinamide adenine dinucleotide phosphate (NADPH)-dependent aldoketoreductase activity. The binding of oxidized and reduced NADP(H) cofactors may be required for the regulation of potassium channel activity. The sequence is that of Voltage-gated potassium channel subunit beta-3 from Rattus norvegicus (Rat).